A 376-amino-acid chain; its full sequence is Carbohydrate sulfotransferase 14 (376 aa).

Positions 1 to 30 (MFPRPLTPLAAPKSAETLGRTPRRAPLGRA) are disordered. Residues 1–39 (MFPRPLTPLAAPKSAETLGRTPRRAPLGRARAGLGGPPL) are Cytoplasmic-facing. Positions 18–30 (LGRTPRRAPLGRA) are enriched in low complexity. A helical; Signal-anchor for type II membrane protein membrane pass occupies residues 40-60 (LLPSMLMFAVIVASSGLLLMI). Residues 61–376 (ERGILSEMKP…PNVTKEACHQ (316 aa)) are Lumenal-facing. Residues 76–96 (PSHKGAAWSGTDPKPRGLSLD) form a disordered region. N-linked (GlcNAc...) asparagine glycosylation occurs at Asn110. 3'-phosphoadenylyl sulfate is bound by residues 155–161 (PKVACSN) and 213–221 (RDPLERLLS). N-linked (GlcNAc...) asparagine glycosylation is present at Asn368.

This sequence belongs to the sulfotransferase 2 family.

The protein resides in the golgi apparatus membrane. It carries out the reaction dermatan + n 3'-phosphoadenylyl sulfate = dermatan 4'-sulfate + n adenosine 3',5'-bisphosphate + n H(+). Catalyzes the transfer of sulfate to position 4 of the N-acetylgalactosamine (GalNAc) residue of dermatan sulfate. Plays a pivotal role in the formation of 4-0-sulfated IdoA blocks in dermatan sulfate. Transfers sulfate to the C-4 hydroxyl of beta1,4-linked GalNAc that is substituted with an alpha-linked iduronic acid (IdoUA) at the C-3 hydroxyl. Transfers sulfate more efficiently to GalNAc residues in -IdoUA-GalNAc-IdoUA- than in -GlcUA-GalNAc-GlcUA-sequences. Has preference for partially desulfated dermatan sulfate. Addition of sulfate to GalNAc may occur immediately after epimerization of GlcUA to IdoUA. Appears to have an important role in the formation of the cerebellar neural network during postnatal brain development. In Mus musculus (Mouse), this protein is Carbohydrate sulfotransferase 14 (Chst14).